Consider the following 156-residue polypeptide: Small ribosomal subunit protein uS7 (156 aa).

Belongs to the universal ribosomal protein uS7 family. In terms of assembly, part of the 30S ribosomal subunit. Contacts proteins S9 and S11.

In terms of biological role, one of the primary rRNA binding proteins, it binds directly to 16S rRNA where it nucleates assembly of the head domain of the 30S subunit. Is located at the subunit interface close to the decoding center, probably blocks exit of the E-site tRNA. This chain is Small ribosomal subunit protein uS7, found in Parasynechococcus marenigrum (strain WH8102).